The primary structure comprises 436 residues: Probable mediator of RNA polymerase II transcription subunit 26b (436 aa).

Residues 71-111 (PGDDEANRGTTGNGGGGTAVDEDYEVAGGSKESKANSSRGD) are disordered. The TFIIS N-terminal domain maps to 139-214 (KEVARIKEIL…AEWKELVDQW (76 aa)). Positions 263–376 (HFFDSLDFDG…PQQEKLKGLD (114 aa)) are disordered. Composition is skewed to basic and acidic residues over residues 276–290 (NSEE…ERRP) and 332–350 (TEQR…EKPM). The stretch at 382–402 (EFAKRKLQESYQHHENAKKQR) forms a coiled coil. Residues 408–436 (EMIPKQGSAQKPQLKRPGMSNRNWANGRK) are disordered. The span at 427-436 (SNRNWANGRK) shows a compositional bias: polar residues.

The protein belongs to the Mediator complex subunit 26 family. Component of the Mediator complex.

The protein resides in the nucleus. Component of the Mediator complex, a coactivator involved in the regulated transcription of nearly all RNA polymerase II-dependent genes. Mediator functions as a bridge to convey information from gene-specific regulatory proteins to the basal RNA polymerase II transcription machinery. The Mediator complex, having a compact conformation in its free form, is recruited to promoters by direct interactions with regulatory proteins and serves for the assembly of a functional preinitiation complex with RNA polymerase II and the general transcription factors. May play a role in transcription elongation. This chain is Probable mediator of RNA polymerase II transcription subunit 26b (MED26B), found in Arabidopsis thaliana (Mouse-ear cress).